Here is a 417-residue protein sequence, read N- to C-terminus: Glutamate-1-semialdehyde 2,1-aminomutase (417 aa).

Lysine 263 bears the N6-(pyridoxal phosphate)lysine mark.

The protein belongs to the class-III pyridoxal-phosphate-dependent aminotransferase family. HemL subfamily. The cofactor is pyridoxal 5'-phosphate.

It localises to the cytoplasm. The enzyme catalyses (S)-4-amino-5-oxopentanoate = 5-aminolevulinate. It functions in the pathway porphyrin-containing compound metabolism; protoporphyrin-IX biosynthesis; 5-aminolevulinate from L-glutamyl-tRNA(Glu): step 2/2. In Methanospirillum hungatei JF-1 (strain ATCC 27890 / DSM 864 / NBRC 100397 / JF-1), this protein is Glutamate-1-semialdehyde 2,1-aminomutase.